The primary structure comprises 394 residues: Dual specificity protein phosphatase 4 (394 aa).

Residue Val2 is modified to N-acetylvaline. Positions 41–159 (SGGKCLLLDC…FSSEYPEFCS (119 aa)) constitute a Rhodanese domain. The Tyrosine-protein phosphatase domain maps to 195–336 (GPVEILPFLY…LLQFESQVLA (142 aa)). Cys280 functions as the Phosphocysteine intermediate in the catalytic mechanism. Ser386 and Ser391 each carry phosphoserine; by MAPK.

This sequence belongs to the protein-tyrosine phosphatase family. Non-receptor class dual specificity subfamily. In terms of assembly, hollow spherical complex composed of 24 subunits with pseudooctahedral symmetry, has a tetramer as the basic unit. Phosphorylation in the C-terminus by ERK1/2 inhibits proteasomal degradation and stabilizes the protein.

It is found in the nucleus. It carries out the reaction O-phospho-L-tyrosyl-[protein] + H2O = L-tyrosyl-[protein] + phosphate. The enzyme catalyses O-phospho-L-seryl-[protein] + H2O = L-seryl-[protein] + phosphate. It catalyses the reaction O-phospho-L-threonyl-[protein] + H2O = L-threonyl-[protein] + phosphate. Regulates mitogenic signal transduction by dephosphorylating both Thr and Tyr residues on MAP kinases ERK1 and ERK2. The chain is Dual specificity protein phosphatase 4 (DUSP4) from Homo sapiens (Human).